The chain runs to 694 residues: ATP-binding cassette sub-family G member 8 (694 aa).

Over 1 to 437 (MAEKTKEETQ…ISNDFRDLPT (437 aa)) the chain is Cytoplasmic. The region spanning 91 to 335 (AQFKLPWRSR…FTSIGYPCPR (245 aa)) is the ABC transporter domain. The ABC transmembrane type-2 domain maps to 436 to 684 (PTLFIHGAEA…FLSLYYLSLK (249 aa)). Residues 438 to 458 (LFIHGAEACLMSLIIGFLYYG) form a helical membrane-spanning segment. Residues 459–468 (HADKPLSFMD) are Extracellular-facing. The chain crosses the membrane as a helical span at residues 469 to 489 (MAALLFMIGALIPFNVILDVV). Residues 490–518 (SKCHSERSLLYYELEDGLYTAGPYFFAKV) are Cytoplasmic-facing. A helical transmembrane segment spans residues 519–539 (LGELPEHCAYVIIYGMPIYWL). The Extracellular portion of the chain corresponds to 540-548 (TNLRPGPEL). Residues 549 to 569 (FLLHFMLLWLVVFCCRTMALA) form a helical membrane-spanning segment. At 570–576 (ASAMLPT) the chain is on the cytoplasmic side. The helical transmembrane segment at 577 to 597 (FHMSSFCCNALYNSFYLTAGF) threads the bilayer. Residues 598–660 (MINLNNLWIV…VTAMDLNSHP (63 aa)) are Extracellular-facing. Residue N640 is glycosylated (N-linked (GlcNAc...) asparagine). A helical transmembrane segment spans residues 661–681 (LYAIYLIVIGISCGFLSLYYL). Residues 682-694 (SLKFIKQKSIQDW) lie on the Cytoplasmic side of the membrane.

Belongs to the ABC transporter superfamily. ABCG family. Eye pigment precursor importer (TC 3.A.1.204) subfamily. In terms of assembly, heterodimer with ABCG8. The cofactor is Mg(2+). In terms of processing, N-glycosylated. N-glycosylation is important for efficient export out of the endoplasmic reticulum. As to expression, highest expression in liver, with lower levels in small intestine and colon.

The protein localises to the cell membrane. Its subcellular location is the apical cell membrane. The enzyme catalyses cholesterol(in) + ATP + H2O = cholesterol(out) + ADP + phosphate + H(+). It catalyses the reaction sitosterol(in) + ATP + H2O = sitosterol(out) + ADP + phosphate + H(+). Functionally, ABCG5 and ABCG8 form an obligate heterodimer that mediates Mg(2+)- and ATP-dependent sterol transport across the cell membrane. Plays an essential role in the selective transport of the dietary cholesterol in and out of the enterocytes and in the selective sterol excretion by the liver into bile. Required for normal sterol homeostasis. The heterodimer with ABCG5 has ATPase activity. The sequence is that of ATP-binding cassette sub-family G member 8 from Rattus norvegicus (Rat).